Consider the following 958-residue polypeptide: Eukaryotic translation initiation factor 3 subunit A (958 aa).

Positions 93 to 123 form a coiled coil; the sequence is MHLATERAELARNQAQALEEALDVEDLEADK. The 198-residue stretch at 316–513 folds into the PCI domain; it reads LQLIASSVVL…GLSSLVNRVL (198 aa). Coiled coils occupy residues 548–696 and 796–861; these read EALS…AKRE and LRSE…LRKS. The segment covering 804–859 has biased composition (basic and acidic residues); that stretch reads KRLQEEEEARKREEAERRKKEEAERQAKLDEIAEKQRRRMLELEEKEKREREEILR. Positions 804–958 are disordered; that stretch reads KRLQEEEEAR…SRTSWPASRR (155 aa). Residues 877-894 are compositionally biased toward low complexity; sequence PAELGGAAPIPAAAATAP. Positions 929-942 are enriched in basic and acidic residues; the sequence is KPDDRPSWRDERKP. Over residues 946–958 the composition is skewed to polar residues; the sequence is GSGSRTSWPASRR.

This sequence belongs to the eIF-3 subunit A family. Component of the eukaryotic translation initiation factor 3 (eIF-3) complex.

It localises to the cytoplasm. In terms of biological role, RNA-binding component of the eukaryotic translation initiation factor 3 (eIF-3) complex, which is involved in protein synthesis of a specialized repertoire of mRNAs and, together with other initiation factors, stimulates binding of mRNA and methionyl-tRNAi to the 40S ribosome. The eIF-3 complex specifically targets and initiates translation of a subset of mRNAs involved in cell proliferation. This Nicotiana tabacum (Common tobacco) protein is Eukaryotic translation initiation factor 3 subunit A (TIF3A1).